A 175-amino-acid chain; its full sequence is Inorganic pyrophosphatase (175 aa).

Substrate is bound by residues K29, R43, and Y55. Mg(2+)-binding residues include D65, D70, and D102. Position 141 (Y141) interacts with substrate.

It belongs to the PPase family. As to quaternary structure, homohexamer. Requires Mg(2+) as cofactor.

Its subcellular location is the cytoplasm. The enzyme catalyses diphosphate + H2O = 2 phosphate + H(+). Functionally, catalyzes the hydrolysis of inorganic pyrophosphate (PPi) forming two phosphate ions. The sequence is that of Inorganic pyrophosphatase from Rickettsia bellii (strain RML369-C).